We begin with the raw amino-acid sequence, 642 residues long: Mini-chromosome maintenance complex-binding protein (642 aa).

Residues 151-161 (ARVSPSTSYTP) show a composition bias toward polar residues. Residues 151 to 197 (ARVSPSTSYTPSRHKRSYEDDDDMDLQPNKQKDQHAGARQAGSVGGL) form a disordered region. Phosphoserine is present on Ser154. Phosphothreonine is present on Thr160. Residues Ser167 and Ser298 each carry the phosphoserine modification.

It belongs to the MCMBP family. In terms of assembly, interacts with the MCM complex: associates with the MCM3-7 complex which lacks MCM2, while it does not interact with the MCM complex when MCM2 is present (MCM2-7 complex). Interacts with the RPA complex, when composed of all RPA1, RPA2 and RPA3 components, but not with RPA1 or RPA2 alone.

Its subcellular location is the nucleus. Functionally, associated component of the MCM complex that acts as a regulator of DNA replication. Binds to the MCM complex during late S phase and promotes the disassembly of the MCM complex from chromatin, thereby acting as a key regulator of pre-replication complex (pre-RC) unloading from replicated DNA. Can dissociate the MCM complex without addition of ATP; probably acts by destabilizing interactions of each individual subunits of the MCM complex. Required for sister chromatid cohesion. This chain is Mini-chromosome maintenance complex-binding protein (MCMBP), found in Homo sapiens (Human).